Consider the following 65-residue polypeptide: UPF0434 protein BH12860 (65 aa).

Belongs to the UPF0434 family.

In Bartonella henselae (strain ATCC 49882 / DSM 28221 / CCUG 30454 / Houston 1) (Rochalimaea henselae), this protein is UPF0434 protein BH12860.